A 99-amino-acid chain; its full sequence is IEVLLGGDDGSLAFIPNDFSVAAGEKIVFKNNAGFPHNVVFDEDEIPSGVDAGKISMNEEDLLNAPGEVYKVNLTEKGSYSFYCSPHQGAGMVGKVTVN.

In terms of domain architecture, Plastocyanin-like spans 1–99 (IEVLLGGDDG…AGMVGKVTVN (99 aa)). Cu cation contacts are provided by histidine 37, cysteine 84, histidine 87, and methionine 92.

Belongs to the plastocyanin family. Cu(2+) serves as cofactor.

It is found in the plastid. Its subcellular location is the chloroplast thylakoid membrane. In terms of biological role, participates in electron transfer between P700 and the cytochrome b6-f complex in photosystem I. The protein is Plastocyanin (PETE) of Cucurbita pepo (Vegetable marrow).